The primary structure comprises 117 residues: Probable non-functional immunoglobulin heavy variable 3-16 (117 aa).

The signal sequence occupies residues 1 to 19; sequence MEFGLSWVFLAGILKGVQC. A framework-1 region spans residues 20–44; sequence EVQLVESGGGLVQPGGSLRLSCAAS. The 97-residue stretch at 21-117 folds into the Ig-like domain; the sequence is VQLVESGGGL…EDMAVYYCVR (97 aa). Cys-41 and Cys-115 are disulfide-bonded. The complementarity-determining-1 stretch occupies residues 45–52; it reads GFTFSNSD. Residues 53-69 are framework-2; the sequence is MNWARKAPGKGLEWVSG. The interval 70-77 is complementarity-determining-2; it reads VSWNGSRT. Asn-73 carries N-linked (GlcNAc...) asparagine glycosylation. The segment at 78–115 is framework-3; that stretch reads HYVDSVKRRFIISRDNSRNSLYLQKNRRRAEDMAVYYC. A complementarity-determining-3 region spans residues 116-117; that stretch reads VR.

In terms of assembly, immunoglobulins are composed of two identical heavy chains and two identical light chains; disulfide-linked.

The protein resides in the secreted. The protein localises to the cell membrane. Its function is as follows. Probable non-functional open reading frame (ORF) of V region of the variable domain of immunoglobulin heavy chains. Non-functional ORF generally cannot participate in the synthesis of a productive immunoglobulin chain due to altered V-(D)-J or switch recombination and/or splicing site (at mRNA level) and/or conserved amino acid change (protein level). Immunoglobulins, also known as antibodies, are membrane-bound or secreted glycoproteins produced by B lymphocytes. In the recognition phase of humoral immunity, the membrane-bound immunoglobulins serve as receptors which, upon binding of a specific antigen, trigger the clonal expansion and differentiation of B lymphocytes into immunoglobulins-secreting plasma cells. Secreted immunoglobulins mediate the effector phase of humoral immunity, which results in the elimination of bound antigens. The antigen binding site is formed by the variable domain of one heavy chain, together with that of its associated light chain. Thus, each immunoglobulin has two antigen binding sites with remarkable affinity for a particular antigen. The variable domains are assembled by a process called V-(D)-J rearrangement and can then be subjected to somatic hypermutations which, after exposure to antigen and selection, allow affinity maturation for a particular antigen. This is Probable non-functional immunoglobulin heavy variable 3-16 from Homo sapiens (Human).